We begin with the raw amino-acid sequence, 129 residues long: NADH-quinone oxidoreductase subunit A (129 aa).

A run of 3 helical transmembrane segments spans residues 9 to 29, 68 to 88, and 97 to 117; these read FPIG…LGLA, LLFI…VLLL, and LGWP…AGLV.

The protein belongs to the complex I subunit 3 family. NDH-1 is composed of 14 different subunits. Subunits NuoA, H, J, K, L, M, N constitute the membrane sector of the complex.

It is found in the cell inner membrane. It catalyses the reaction a quinone + NADH + 5 H(+)(in) = a quinol + NAD(+) + 4 H(+)(out). In terms of biological role, NDH-1 shuttles electrons from NADH, via FMN and iron-sulfur (Fe-S) centers, to quinones in the respiratory chain. The immediate electron acceptor for the enzyme in this species is believed to be ubiquinone. Couples the redox reaction to proton translocation (for every two electrons transferred, four hydrogen ions are translocated across the cytoplasmic membrane), and thus conserves the redox energy in a proton gradient. The protein is NADH-quinone oxidoreductase subunit A of Anaeromyxobacter dehalogenans (strain 2CP-C).